The chain runs to 360 residues: Phospho-N-acetylmuramoyl-pentapeptide-transferase (360 aa).

10 consecutive transmembrane segments (helical) span residues 26 to 46, 73 to 93, 97 to 117, 135 to 155, 168 to 188, 199 to 219, 236 to 256, 263 to 283, 288 to 308, and 338 to 358; these read AILG…ILIK, TMGG…WGDL, YVLV…IDDY, ALQS…STMV, IMPQ…VGAS, GLAI…AYLS, AGEL…FLWF, VFMG…IAIL, ILLV…ILQV, and VIVR…ATLK.

The protein belongs to the glycosyltransferase 4 family. MraY subfamily. Mg(2+) serves as cofactor.

It is found in the cell inner membrane. It catalyses the reaction UDP-N-acetyl-alpha-D-muramoyl-L-alanyl-gamma-D-glutamyl-meso-2,6-diaminopimeloyl-D-alanyl-D-alanine + di-trans,octa-cis-undecaprenyl phosphate = di-trans,octa-cis-undecaprenyl diphospho-N-acetyl-alpha-D-muramoyl-L-alanyl-D-glutamyl-meso-2,6-diaminopimeloyl-D-alanyl-D-alanine + UMP. It functions in the pathway cell wall biogenesis; peptidoglycan biosynthesis. Functionally, catalyzes the initial step of the lipid cycle reactions in the biosynthesis of the cell wall peptidoglycan: transfers peptidoglycan precursor phospho-MurNAc-pentapeptide from UDP-MurNAc-pentapeptide onto the lipid carrier undecaprenyl phosphate, yielding undecaprenyl-pyrophosphoryl-MurNAc-pentapeptide, known as lipid I. The sequence is that of Phospho-N-acetylmuramoyl-pentapeptide-transferase from Shewanella frigidimarina (strain NCIMB 400).